The sequence spans 289 residues: tRNA pseudouridine synthase B (289 aa).

Asp55 serves as the catalytic Nucleophile. Residues 243 to 289 (PGGVLAQHEREGSRALDSAAGNAEHDREEARIADNNREDRSRQHADR) are disordered. Over residues 265-289 (AEHDREEARIADNNREDRSRQHADR) the composition is skewed to basic and acidic residues.

This sequence belongs to the pseudouridine synthase TruB family. Type 1 subfamily.

It catalyses the reaction uridine(55) in tRNA = pseudouridine(55) in tRNA. In terms of biological role, responsible for synthesis of pseudouridine from uracil-55 in the psi GC loop of transfer RNAs. This chain is tRNA pseudouridine synthase B, found in Chlorobium luteolum (strain DSM 273 / BCRC 81028 / 2530) (Pelodictyon luteolum).